Reading from the N-terminus, the 64-residue chain is DGYIRGSNGCKVSCLWGNEGCNKECRAYGASYGYCWTWGLACWCEGLPDDKTWKSESNTCGRKK.

In terms of domain architecture, LCN-type CS-alpha/beta spans 1 to 61 (DGYIRGSNGC…TWKSESNTCG (61 aa)). Disulfide bonds link Cys-10–Cys-60, Cys-14–Cys-35, Cys-21–Cys-42, and Cys-25–Cys-44. Residue Cys-60 is modified to Cysteine amide.

Belongs to the long (4 C-C) scorpion toxin superfamily. Sodium channel inhibitor family. Beta subfamily. Expressed by the venom gland.

The protein resides in the secreted. Functionally, depressant insect beta-toxins cause a transient contraction paralysis followed by a slow flaccid paralysis. They bind voltage-independently at site-4 of sodium channels (Nav) and shift the voltage of activation toward more negative potentials thereby affecting sodium channel activation and promoting spontaneous and repetitive firing. This chain is Toxin BmKIT3, found in Olivierus martensii (Manchurian scorpion).